Here is a 276-residue protein sequence, read N- to C-terminus: NADH-cytochrome b5 reductase 2 (276 aa).

In terms of domain architecture, FAD-binding FR-type spans 15–127; that stretch reads EAKYPLPLIE…RGPTGRLFYN (113 aa). Lys-17 bears the N6-acetyllysine mark. Position 18 is a phosphotyrosine (Tyr-18). FAD is bound by residues 107-137 and 146-181; these read ENMK…IKTD and LVHH…RMSL.

This sequence belongs to the flavoprotein pyridine nucleotide cytochrome reductase family. The cofactor is FAD.

It carries out the reaction 2 Fe(III)-[cytochrome b5] + NADH = 2 Fe(II)-[cytochrome b5] + NAD(+) + H(+). Functionally, NADH-cytochrome b5 reductases are involved in desaturation and elongation of fatty acids, cholesterol biosynthesis, drug metabolism, and, in erythrocyte, methemoglobin reduction. Responsible for NADH-dependent lucigenin chemiluminescence in spermatozoa by reducing both lucigenin and 2-[4-iodophenyl]-3-[4-nitrophenyl]-5-[2,4-disulfophenyl]-2H tetrazolium monosodium salt (WST-1). In Rattus norvegicus (Rat), this protein is NADH-cytochrome b5 reductase 2 (Cyb5r2).